Reading from the N-terminus, the 187-residue chain is Benzene 1,2-dioxygenase subunit beta (187 aa).

Belongs to the bacterial ring-hydroxylating dioxygenase beta subunit family. In terms of assembly, this dioxygenase system consists of four proteins: the two subunits of the hydroxylase component (BedC1 and BedC2), a ferredoxin (BedB) and a ferredoxin reductase (BedA).

It catalyses the reaction benzene + NADH + O2 + H(+) = cis-1,2-dihydrobenzene-1,2-diol + NAD(+). Its pathway is aromatic compound metabolism; benzene degradation; catechol from benzene: step 1/2. In terms of biological role, the beta subunit may be responsible for the substrate specificity of the enzyme. This Pseudomonas putida (Arthrobacter siderocapsulatus) protein is Benzene 1,2-dioxygenase subunit beta (bedC2).